A 161-amino-acid chain; its full sequence is Succinate dehydrogenase assembly factor 2, mitochondrial (161 aa).

The transit peptide at 1 to 31 (MSLLRVTRSSGHLSAVCRLPARSISTTSILL) directs the protein to the mitochondrion.

The protein belongs to the SDHAF2 family. As to quaternary structure, interacts with the flavoprotein subunit within the SDH catalytic dimer.

It localises to the mitochondrion matrix. Functionally, plays an essential role in the assembly of succinate dehydrogenase (SDH), an enzyme complex (also referred to as respiratory complex II) that is a component of both the tricarboxylic acid (TCA) cycle and the mitochondrial electron transport chain, and which couples the oxidation of succinate to fumarate with the reduction of ubiquinone (coenzyme Q) to ubiquinol. Required for flavinylation (covalent attachment of FAD) of the flavoprotein subunit of the SDH catalytic dimer. This chain is Succinate dehydrogenase assembly factor 2, mitochondrial, found in Aedes aegypti (Yellowfever mosquito).